We begin with the raw amino-acid sequence, 554 residues long: (E)-nerolidol synthase TPS18VF (554 aa).

(2E,6E)-farnesyl diphosphate-binding residues include arginine 276, aspartate 313, aspartate 317, arginine 455, and aspartate 458. Residues aspartate 313 and aspartate 317 each contribute to the Mg(2+) site. The short motif at 313 to 317 (DDIFD) is the DDXXD motif element. Mg(2+) is bound by residues aspartate 458, serine 462, and glutamate 466.

This sequence belongs to the terpene synthase family. Tpsb subfamily. Mg(2+) is required as a cofactor. Mn(2+) serves as cofactor. In terms of tissue distribution, highly expressed in glandular trichomes.

It carries out the reaction (2E,6E)-farnesyl diphosphate + H2O = (6E)-nerolidol + diphosphate. It catalyses the reaction (2E)-geranyl diphosphate + H2O = (S)-linalool + diphosphate. Its pathway is secondary metabolite biosynthesis; terpenoid biosynthesis. In terms of biological role, involved in sesquiterpene olefins biosynthesis, constituants of cannabinoids and terpenoids-rich resins. Catalyzes primarily the conversion of (2E)-farnesyl diphosphate to (E)-nerolidol, and the conversion of (2E)-geranyl diphosphate to (+)linalool. The polypeptide is (E)-nerolidol synthase TPS18VF (Cannabis sativa (Hemp)).